Reading from the N-terminus, the 437-residue chain is MMMLSKSLLSAATAASALAAVLQPVPRASSFVTISGTQFNIDGKVGYFAGTNCYWCSFLTNHADVDSTFSHISSSGLKVVRVWGFNDVNTQPSPGQIWFQKLSATGSTINTGADGLQTLDYVVQSAEQHNLKLIIPFVNNWSDYGGINAYVNAFGGNATTWYTNTAAQTQYRKYVQAVVSRYANSTAIFAWELGNEPRCNGCSTDVIVQWATSVSQYVKSLDSNHLVTLGDEGLGLSTGDGAYPYTYGEGTDFAKNVQIKSLDFGTFHLYPDSWGTNYTWGNGWIQTHAAACLAAGKPCVFEEYGAQQNPCTNEAPWQTTSLTTRGMGGDMFWQWGDTFANGAQSNSDPYTVWYNSSNWQCLVKNHVDAINGGTTTPPPVSSTTTTSSRTSSTPPPPGGSCSPLYGQCGGSGYTGPTCCAQGTCIYSNYWYSQCLNT.

Residues 1 to 19 (MMMLSKSLLSAATAASALA) form the signal peptide. Positions 20 to 27 (AVLQPVPR) are excised as a propeptide. Residues 28 to 376 (ASSFVTISGT…VDAINGGTTT (349 aa)) are catalytic. Cys53 and Cys56 are oxidised to a cystine. N-linked (GlcNAc...) asparagine glycans are attached at residues Asn157 and Asn184. The active-site Proton donor/acceptor is Glu196. Substrate is bound at residue 196–198 (EPR). Cys199 and Cys202 form a disulfide bridge. Residues Glu232 and Trp274 each contribute to the substrate site. N-linked (GlcNAc...) asparagine glycosylation occurs at Asn277. Cysteines 292 and 299 form a disulfide. The Nucleophile role is filled by Glu303. Cys311 and Cys361 are joined by a disulfide. Asn355 carries N-linked (GlcNAc...) asparagine glycosylation. The interval 372–399 (GGTTTPPPVSSTTTTSSRTSSTPPPPGG) is disordered. Residues 377–399 (PPPVSSTTTTSSRTSSTPPPPGG) are linker. A compositionally biased stretch (low complexity) spans 381-392 (SSTTTTSSRTSS). Residues 400-435 (SCSPLYGQCGGSGYTGPTCCAQGTCIYSNYWYSQCL) enclose the CBM1 domain.

It belongs to the glycosyl hydrolase 5 (cellulase A) family. As to quaternary structure, monomer.

It is found in the secreted. The enzyme catalyses Random hydrolysis of (1-&gt;4)-beta-D-mannosidic linkages in mannans, galactomannans and glucomannans.. Functionally, endo-1,4-mannanase that catalyzes the random hydrolysis of (1-&gt;4)-beta-D-mannosidic linkages in mannans and heteromannans. It is a crucial enzyme for depolymerization of seed galactomannans and wood galactoglucomannans. Active against locust bean gum and ivory nut mannan, releasing mainly tri- and disaccharides. Also has transglycosylation activity. Transglycosylation of two mannotrioses into a mannohexaose is the major transglycosylation route. The protein is Mannan endo-1,4-beta-mannosidase A of Hypocrea jecorina (strain ATCC 56765 / BCRC 32924 / NRRL 11460 / Rut C-30) (Trichoderma reesei).